The chain runs to 159 residues: NADH-quinone oxidoreductase subunit I (159 aa).

4Fe-4S ferredoxin-type domains lie at arginine 51 to aspartate 80 and threonine 90 to asparagine 119. Positions 60, 63, 66, 70, 99, 102, 105, and 109 each coordinate [4Fe-4S] cluster.

It belongs to the complex I 23 kDa subunit family. As to quaternary structure, NDH-1 is composed of 14 different subunits. Subunits NuoA, H, J, K, L, M, N constitute the membrane sector of the complex. Requires [4Fe-4S] cluster as cofactor.

The protein localises to the cell inner membrane. It catalyses the reaction a quinone + NADH + 5 H(+)(in) = a quinol + NAD(+) + 4 H(+)(out). Functionally, NDH-1 shuttles electrons from NADH, via FMN and iron-sulfur (Fe-S) centers, to quinones in the respiratory chain. The immediate electron acceptor for the enzyme in this species is believed to be ubiquinone. Couples the redox reaction to proton translocation (for every two electrons transferred, four hydrogen ions are translocated across the cytoplasmic membrane), and thus conserves the redox energy in a proton gradient. This Rickettsia peacockii (strain Rustic) protein is NADH-quinone oxidoreductase subunit I.